The sequence spans 253 residues: 5'/3'-nucleotidase SurE (253 aa).

A divalent metal cation is bound by residues aspartate 8, aspartate 9, serine 39, and asparagine 92.

It belongs to the SurE nucleotidase family. A divalent metal cation is required as a cofactor.

The protein localises to the cytoplasm. It catalyses the reaction a ribonucleoside 5'-phosphate + H2O = a ribonucleoside + phosphate. The catalysed reaction is a ribonucleoside 3'-phosphate + H2O = a ribonucleoside + phosphate. It carries out the reaction [phosphate](n) + H2O = [phosphate](n-1) + phosphate + H(+). Nucleotidase with a broad substrate specificity as it can dephosphorylate various ribo- and deoxyribonucleoside 5'-monophosphates and ribonucleoside 3'-monophosphates with highest affinity to 3'-AMP. Also hydrolyzes polyphosphate (exopolyphosphatase activity) with the preference for short-chain-length substrates (P20-25). Might be involved in the regulation of dNTP and NTP pools, and in the turnover of 3'-mononucleotides produced by numerous intracellular RNases (T1, T2, and F) during the degradation of various RNAs. In Shigella dysenteriae serotype 1 (strain Sd197), this protein is 5'/3'-nucleotidase SurE.